We begin with the raw amino-acid sequence, 323 residues long: Olfactory receptor 2AE1 (323 aa).

Topologically, residues 1 to 25 (MWQKNQTSLADFILEGLFDDSLTHL) are extracellular. The N-linked (GlcNAc...) asparagine glycan is linked to N5. Residues 26–49 (FLFSLTMVVFLIAVSGNTLTILLI) form a helical membrane-spanning segment. The Cytoplasmic portion of the chain corresponds to 50–57 (CIDPQLHT). The helical transmembrane segment at 58–79 (PMYFLLSQLSLMDLMHVSTIIL) threads the bilayer. Topologically, residues 80–100 (KMATNYLSGKKSISFVGCATQ) are extracellular. The cysteines at positions 97 and 189 are disulfide-linked. The chain crosses the membrane as a helical span at residues 101 to 120 (HFLYLCLGGAECFLLAVMSY). The Cytoplasmic portion of the chain corresponds to 121 to 139 (DRYVAICHPLRYAVLMNKK). The chain crosses the membrane as a helical span at residues 140-158 (VGLMMAVMSWLGASVNSLI). The Extracellular portion of the chain corresponds to 159 to 195 (HMAILMHFPFCGPRKVYHFYCEFPAVVKLVCGDITVY). Residues 196–218 (ETTVYISSILLLLPIFLISTSYV) traverse the membrane as a helical segment. Residues 219 to 235 (FILQSVIQMRSSGSKRN) lie on the Cytoplasmic side of the membrane. Residues 236 to 258 (AFATCGSHLTVVSLWFGACIFSY) traverse the membrane as a helical segment. Residues 259-271 (MRPRSQCTLLQNK) lie on the Extracellular side of the membrane. A helical membrane pass occupies residues 272–291 (VGSVFYSIITPTLNSLIYTL). The Cytoplasmic segment spans residues 292-323 (RNKDVAKALRRVLRRDVITQCIQRLQLWLPRV).

This sequence belongs to the G-protein coupled receptor 1 family.

The protein localises to the cell membrane. In terms of biological role, odorant receptor. The polypeptide is Olfactory receptor 2AE1 (OR2AE1) (Homo sapiens (Human)).